Consider the following 383-residue polypeptide: Aliphatic nitrilase (383 aa).

In terms of domain architecture, CN hydrolase spans 13 to 288 (VKVATVQAEP…EGLLYAELDL (276 aa)). E53 acts as the Proton acceptor in catalysis. K136 acts as the Proton donor in catalysis. C170 functions as the Nucleophile in the catalytic mechanism. Residues 359–383 (ATLPLDAPAPAPAPEQKSGRAKAEA) form a disordered region.

It belongs to the carbon-nitrogen hydrolase superfamily. Nitrilase family.

It catalyses the reaction an aliphatic nitrile + 2 H2O = a carboxylate + NH4(+). In terms of biological role, acts on aliphatic nitriles such as acrylonitrile, crotononitrile and glutaronitrile. The protein is Aliphatic nitrilase of Rhodococcus rhodochrous.